Reading from the N-terminus, the 393-residue chain is SH3 domain-binding protein 5-like (393 aa).

2 disordered regions span residues 1 to 59 (MAEL…LDPR) and 272 to 332 (HARR…DTDT). A Phosphothreonine modification is found at Thr13. Basic and acidic residues predominate over residues 18 to 28 (LRPEVVEDEVP). A phosphoserine mark is found at Ser30 and Ser49. Coiled coils occupy residues 59–140 (RIQE…YERA) and 169–272 (WQEM…EQIH). The span at 304–313 (GDSGIEGAEG) shows a compositional bias: gly residues. Residues 317-332 (EEGSSLGPGPAPDTDT) show a composition bias toward low complexity. Phosphoserine is present on residues Ser343, Ser350, Ser358, Ser362, and Ser378. The disordered stretch occupies residues 364–393 (DGQELGTRSGGRRGSDGGVRGGRHQRSVSL). The span at 384 to 393 (GGRHQRSVSL) shows a compositional bias: basic residues.

Belongs to the SH3BP5 family.

Its function is as follows. Functions as a guanine nucleotide exchange factor (GEF) for RAB11A. In Pongo abelii (Sumatran orangutan), this protein is SH3 domain-binding protein 5-like (SH3BP5L).